A 380-amino-acid polypeptide reads, in one-letter code: Putative glutamate--cysteine ligase 2-1 (380 aa).

It belongs to the glutamate--cysteine ligase type 2 family. YbdK subfamily.

The enzyme catalyses L-cysteine + L-glutamate + ATP = gamma-L-glutamyl-L-cysteine + ADP + phosphate + H(+). Functionally, ATP-dependent carboxylate-amine ligase which exhibits weak glutamate--cysteine ligase activity. The sequence is that of Putative glutamate--cysteine ligase 2-1 from Mycolicibacterium vanbaalenii (strain DSM 7251 / JCM 13017 / BCRC 16820 / KCTC 9966 / NRRL B-24157 / PYR-1) (Mycobacterium vanbaalenii).